Here is a 322-residue protein sequence, read N- to C-terminus: Outer membrane protein assembly factor BamC (322 aa).

Positions 1-22 are cleaved as a signal peptide; the sequence is MISLLAVAVLAGCSNPETRSQA.

Belongs to the BamC family. As to quaternary structure, part of the Bam complex.

It localises to the cell outer membrane. Functionally, part of the outer membrane protein assembly complex, which is involved in assembly and insertion of beta-barrel proteins into the outer membrane. The protein is Outer membrane protein assembly factor BamC of Oceanimonas sp. (strain GK1 / IBRC-M 10197).